A 440-amino-acid chain; its full sequence is MQATATTLDHEQEYTPINSRNKVLVASLIGTAIEFFDFYIYATAAVIVFPHIFFPQGDPTAATLQSLATFAIAFVARPIGSAVFGHFGDRVGRKATLVASLLTMGISTVVIGLLPGYATIGIFAPLLLALARFGQGLGLGGEWGGAALLATENAPPRKRALYGSFPQLGAPIGFFFANGTFLLLSWLLTDEQFMSWGWRVPFIFSAVLVIIGLYVRVSLHESPVFEKVAKAKKQVKIPLGTLLTKHVRVTVLGTFIMLATYTLFYIMTVYSMTFSTAAAPVGLGLPRNEVLWMLMMAVIGFGVMVPVAGLLADAFGRRKSMVIITTLIILFALFAFNPLLGSGNPILVFAFLLLGLSLMGLTFGPMGALLPELFPTEVRYTGASFSYNVASILGASVAPYIAAWLQTNYGLGAVGLYLAAMAGLTLIALLLTHETRHQSL.

The Cytoplasmic portion of the chain corresponds to 1–34; that stretch reads MQATATTLDHEQEYTPINSRNKVLVASLIGTAIE. A helical membrane pass occupies residues 35–55; the sequence is FFDFYIYATAAVIVFPHIFFP. The Periplasmic portion of the chain corresponds to 56 to 66; the sequence is QGDPTAATLQS. The chain crosses the membrane as a helical span at residues 67–87; it reads LATFAIAFVARPIGSAVFGHF. Residues 88 to 108 are Cytoplasmic-facing; sequence GDRVGRKATLVASLLTMGIST. A run of 2 helical transmembrane segments spans residues 109-129 and 130-150; these read VVIG…LLLA and LARF…ALLA. Over 151-167 the chain is Cytoplasmic; the sequence is TENAPPRKRALYGSFPQ. Residues 168-188 traverse the membrane as a helical segment; the sequence is LGAPIGFFFANGTFLLLSWLL. Residues 189-192 are Periplasmic-facing; the sequence is TDEQ. A helical membrane pass occupies residues 193-213; that stretch reads FMSWGWRVPFIFSAVLVIIGL. Over 214–248 the chain is Cytoplasmic; it reads YVRVSLHESPVFEKVAKAKKQVKIPLGTLLTKHVR. The chain crosses the membrane as a helical span at residues 249-269; that stretch reads VTVLGTFIMLATYTLFYIMTV. Topologically, residues 270-289 are periplasmic; that stretch reads YSMTFSTAAAPVGLGLPRNE. A helical membrane pass occupies residues 290-310; the sequence is VLWMLMMAVIGFGVMVPVAGL. Residues 311 to 320 lie on the Cytoplasmic side of the membrane; it reads LADAFGRRKS. The chain crosses the membrane as a helical span at residues 321–341; that stretch reads MVIITTLIILFALFAFNPLLG. The Periplasmic segment spans residues 342-345; sequence SGNP. The helical transmembrane segment at 346–366 threads the bilayer; sequence ILVFAFLLLGLSLMGLTFGPM. Residues 367-384 lie on the Cytoplasmic side of the membrane; sequence GALLPELFPTEVRYTGAS. The chain crosses the membrane as a helical span at residues 385 to 405; sequence FSYNVASILGASVAPYIAAWL. The Periplasmic portion of the chain corresponds to 406 to 410; that stretch reads QTNYG. Residues 411–431 form a helical membrane-spanning segment; it reads LGAVGLYLAAMAGLTLIALLL. The Cytoplasmic portion of the chain corresponds to 432-440; that stretch reads THETRHQSL.

It belongs to the major facilitator superfamily. Metabolite:H+ Symporter (MHS) family (TC 2.A.1.6) family.

The protein localises to the cell inner membrane. The polypeptide is Inner membrane metabolite transport protein YhjE (yhjE) (Escherichia coli (strain K12)).